The following is a 691-amino-acid chain: DNA ligase (691 aa).

NAD(+)-binding positions include 41–45 (DAEYD), 90–91 (SL), and glutamate 130. The active-site N6-AMP-lysine intermediate is lysine 132. Arginine 153, glutamate 190, lysine 307, and lysine 331 together coordinate NAD(+). Residues cysteine 425, cysteine 428, cysteine 443, and cysteine 449 each coordinate Zn(2+). In terms of domain architecture, BRCT spans 610-691 (APQGVLAGKT…MHTLLEGHAR (82 aa)).

The protein belongs to the NAD-dependent DNA ligase family. LigA subfamily. Mg(2+) is required as a cofactor. The cofactor is Mn(2+).

It carries out the reaction NAD(+) + (deoxyribonucleotide)n-3'-hydroxyl + 5'-phospho-(deoxyribonucleotide)m = (deoxyribonucleotide)n+m + AMP + beta-nicotinamide D-nucleotide.. In terms of biological role, DNA ligase that catalyzes the formation of phosphodiester linkages between 5'-phosphoryl and 3'-hydroxyl groups in double-stranded DNA using NAD as a coenzyme and as the energy source for the reaction. It is essential for DNA replication and repair of damaged DNA. This Burkholderia mallei (strain NCTC 10247) protein is DNA ligase.